A 702-amino-acid polypeptide reads, in one-letter code: Elongation factor G (702 aa).

Residues 8–286 enclose the tr-type G domain; sequence DKVRNIGIIA…AVVEYLPSPL (279 aa). Residues 17–24, 85–89, and 139–142 contribute to the GTP site; these read AHIDAGKT, DTPGH, and NKMD.

Belongs to the TRAFAC class translation factor GTPase superfamily. Classic translation factor GTPase family. EF-G/EF-2 subfamily.

It localises to the cytoplasm. Its function is as follows. Catalyzes the GTP-dependent ribosomal translocation step during translation elongation. During this step, the ribosome changes from the pre-translocational (PRE) to the post-translocational (POST) state as the newly formed A-site-bound peptidyl-tRNA and P-site-bound deacylated tRNA move to the P and E sites, respectively. Catalyzes the coordinated movement of the two tRNA molecules, the mRNA and conformational changes in the ribosome. This is Elongation factor G from Chloroflexus aurantiacus (strain ATCC 29366 / DSM 635 / J-10-fl).